The sequence spans 90 residues: Small ribosomal subunit protein bS18B (90 aa).

The protein belongs to the bacterial ribosomal protein bS18 family. Part of the 30S ribosomal subunit. Forms a tight heterodimer with protein bS6.

Binds as a heterodimer with protein bS6 to the central domain of the 16S rRNA, where it helps stabilize the platform of the 30S subunit. This is Small ribosomal subunit protein bS18B from Roseiflexus sp. (strain RS-1).